Here is a 245-residue protein sequence, read N- to C-terminus: 1-(5-phosphoribosyl)-5-[(5-phosphoribosylamino)methylideneamino] imidazole-4-carboxamide isomerase (245 aa).

Asp-8 serves as the catalytic Proton acceptor. The active-site Proton donor is Asp-130.

Belongs to the HisA/HisF family.

It localises to the cytoplasm. The catalysed reaction is 1-(5-phospho-beta-D-ribosyl)-5-[(5-phospho-beta-D-ribosylamino)methylideneamino]imidazole-4-carboxamide = 5-[(5-phospho-1-deoxy-D-ribulos-1-ylimino)methylamino]-1-(5-phospho-beta-D-ribosyl)imidazole-4-carboxamide. The protein operates within amino-acid biosynthesis; L-histidine biosynthesis; L-histidine from 5-phospho-alpha-D-ribose 1-diphosphate: step 4/9. In Pseudomonas fluorescens (strain Pf0-1), this protein is 1-(5-phosphoribosyl)-5-[(5-phosphoribosylamino)methylideneamino] imidazole-4-carboxamide isomerase.